Here is a 1992-residue protein sequence, read N- to C-terminus: E3 ubiquitin-protein ligase TRIP12 (1992 aa).

Residues 1 to 10 (MSNRPNNNPG) are compositionally biased toward polar residues. Positions 1–398 (MSNRPNNNPG…SGESESDDSE (398 aa)) are disordered. Serine 2 carries the post-translational modification N-acetylserine. At serine 12 the chain carries Phosphoserine. Over residues 18–27 (RNTAGAQPQD) the composition is skewed to polar residues. Residues 29–43 (SIGGRSCSSSSVVIV) show a composition bias toward low complexity. Positions 48–70 (DPDRANTSEKQKTGQVPKKDNSR) are enriched in basic and acidic residues. 3 positions are modified to phosphoserine: serine 77, serine 85, and serine 100. The segment covering 78-88 (PDYNRTNSPSS) has biased composition (polar residues). Polar residues predominate over residues 154–164 (SSCIKSASVSE). Composition is skewed to low complexity over residues 175–188 (PTKL…SAKA) and 196–215 (SSSA…ASSA). Lysine 181 is subject to N6-acetyllysine. Residues 280–290 (PGSSKSETSKP) are compositionally biased toward polar residues. Phosphoserine occurs at positions 310 and 312. The segment covering 330-339 (GSCASASRRG) has biased composition (low complexity). The segment covering 346–358 (GAAEARRQEKMAD) has biased composition (basic and acidic residues). Over residues 362–371 (NQETVNSSAA) the composition is skewed to polar residues. The region spanning 749–836 (MLKKGNAQNT…DPELAKSFIK (88 aa)) is the WWE domain. The interval 938-1044 (SLLTSPPKAC…QSPKSSFLAS (107 aa)) is disordered. A Phosphoserine modification is found at serine 942. Over residues 948–960 (TNGSGSLGSTPSV) the composition is skewed to polar residues. The span at 961–973 (NSGTATAATNASA) shows a compositional bias: low complexity. Phosphoserine occurs at positions 991 and 997. The segment covering 1001–1014 (KRKRLPKRGSRRPK) has biased composition (basic residues). Position 1016 is a phosphoserine (serine 1016). Over residues 1017-1026 (PPRDDDKVDN) the composition is skewed to basic and acidic residues. Residues 1029-1040 (KSPTTTQSPKSS) are compositionally biased toward low complexity. Phosphoserine is present on residues serine 1030, serine 1317, serine 1322, serine 1329, and serine 1376. Threonine 1377 carries the post-translational modification Phosphothreonine. Disordered stretches follow at residues 1407 to 1434 (SNKD…AKKH) and 1568 to 1587 (TNPE…PRLD). The residue at position 1425 (lysine 1425) is an N6-acetyllysine. Position 1427 is a phosphoserine (serine 1427). A K-box region spans residues 1496 to 1570 (EIIPTSEFIN…AMQRLLDTNP (75 aa)). The region spanning 1885 to 1992 (PDHGYTHDSR…REGQQSFHLS (108 aa)) is the HECT domain. The active-site Glycyl thioester intermediate is the cysteine 1959.

The protein belongs to the UPL family. K-HECT subfamily. In terms of assembly, interacts with MYC; leading to disrupt interaction with isoform p19ARF/ARF of CDKN2A. Interacts with TRADD; leading to disrupt interaction with isoform p19ARF/ARF of CDKN2A. Interacts with SMARCC1; leading to disrupt interaction with SMARCE1.

It localises to the nucleus. It is found in the nucleoplasm. It catalyses the reaction S-ubiquitinyl-[E2 ubiquitin-conjugating enzyme]-L-cysteine + [acceptor protein]-L-lysine = [E2 ubiquitin-conjugating enzyme]-L-cysteine + N(6)-ubiquitinyl-[acceptor protein]-L-lysine.. The protein operates within protein modification; protein ubiquitination. E3 ubiquitin-protein ligase involved in ubiquitin fusion degradation (UFD) pathway and regulation of DNA repair. Part of the ubiquitin fusion degradation (UFD) pathway, a process that mediates ubiquitination of protein at their N-terminus, regardless of the presence of lysine residues in target proteins. Acts as a key regulator of DNA damage response by acting as a suppressor of RNF168, an E3 ubiquitin-protein ligase that promotes accumulation of 'Lys-63'-linked histone H2A and H2AX at DNA damage sites, thereby acting as a guard against excessive spreading of ubiquitinated chromatin at damaged chromosomes. In normal cells, mediates ubiquitination and degradation of isoform p19ARF/ARF of CDKN2A, a lysine-less tumor suppressor required for p53/TP53 activation under oncogenic stress. In cancer cells, however, isoform p19ARF/ARF and TRIP12 are located in different cell compartments, preventing isoform p19ARF/ARF ubiquitination and degradation. Does not mediate ubiquitination of isoform p16-INK4a of CDKN2A. Also catalyzes ubiquitination of NAE1 and SMARCE1, leading to their degradation. Ubiquitination and degradation of target proteins is regulated by interaction with proteins such as MYC, TRADD or SMARCC1, which disrupt the interaction between TRIP12 and target proteins. Mediates ubiquitination of ASXL1: following binding to N(6)-methyladenosine methylated DNA, ASXL1 is ubiquitinated by TRIP12, leading to its degradation and subsequent inactivation of the PR-DUB complex. The protein is E3 ubiquitin-protein ligase TRIP12 (TRIP12) of Bos taurus (Bovine).